The sequence spans 378 residues: 5-amino-6-(D-ribitylamino)uracil--L-tyrosine 4-hydroxyphenyl transferase (378 aa).

The 248-residue stretch at 59 to 306 folds into the Radical SAM core domain; it reads VTYVINRNIN…TAVARIYLGN (248 aa). Residues cysteine 73, cysteine 77, and cysteine 80 each coordinate [4Fe-4S] cluster.

Belongs to the radical SAM superfamily. CofH family. In terms of assembly, consists of two subunits, CofG and CofH. Requires [4Fe-4S] cluster as cofactor.

The catalysed reaction is 5-amino-6-(D-ribitylamino)uracil + L-tyrosine + S-adenosyl-L-methionine = 5-amino-5-(4-hydroxybenzyl)-6-(D-ribitylimino)-5,6-dihydrouracil + 2-iminoacetate + 5'-deoxyadenosine + L-methionine + H(+). The protein operates within cofactor biosynthesis; coenzyme F0 biosynthesis. In terms of biological role, catalyzes the radical-mediated synthesis of 5-amino-5-(4-hydroxybenzyl)-6-(D-ribitylimino)-5,6-dihydrouracil from 5-amino-6-(D-ribitylamino)uracil and L-tyrosine. This chain is 5-amino-6-(D-ribitylamino)uracil--L-tyrosine 4-hydroxyphenyl transferase, found in Microcystis aeruginosa (strain NIES-843 / IAM M-2473).